Here is a 582-residue protein sequence, read N- to C-terminus: Max-binding protein MNT (582 aa).

Ser-2 is modified (N-acetylserine). Positions 18–224 (QQQQRAREEQ…RPGGIGTREV (207 aa)) are disordered. Residues 22–42 (RAREEQERLRLEQEREQEQKK) show a composition bias toward basic and acidic residues. 2 stretches are compositionally biased toward pro residues: residues 61–82 (EAPP…PLAT) and 99–108 (QPLPPPPPLP). Low complexity predominate over residues 109 to 123 (AAAQPLPLAPRQPAL). Composition is skewed to pro residues over residues 135 to 149 (APLP…PAPL) and 160 to 171 (NGSPKPLQPLPT). The span at 203-214 (PAEEVKSSEQKK) shows a compositional bias: basic and acidic residues. One can recognise a bHLH domain in the interval 220-271 (GTREVHNKLEKNRRAHLKECFETLKRNIPNVDDKKTSNLSVLRTALRYIQSL). A leucine-zipper region spans residues 271-299 (LKRKEKEYEHEMERLAREKIATQQRLAEL). Residues 319–422 (TGQPEDDQAS…PPPPAAPAQT (104 aa)) form a disordered region. Over residues 334–345 (EGEDNIDEDMEE) the composition is skewed to acidic residues. Positions 368–381 (LPPPSTTPAPLPPH) are enriched in pro residues. Residues 387–408 (HSVALPPAHLPVQQQQPQQKTP) are compositionally biased toward low complexity. A compositionally biased stretch (pro residues) spans 409 to 418 (LPAPPPPPAA).

Efficient DNA binding requires dimerization with another bHLH protein. Binds DNA as a homodimer or a heterodimer with MAX.

The protein localises to the nucleus. Its function is as follows. Binds DNA as a heterodimer with MAX and represses transcription. Binds to the canonical E box sequence 5'-CACGTG-3' and, with higher affinity, to 5'-CACGCG-3'. This chain is Max-binding protein MNT (MNT), found in Homo sapiens (Human).